A 70-amino-acid chain; its full sequence is Guanine nucleotide-binding protein G(I)/G(S)/G(O) subunit gamma-8 (70 aa).

The residue at position 67 (Cys-67) is a Cysteine methyl ester. Cys-67 carries the S-geranylgeranyl cysteine lipid modification. A propeptide spans Thr-68 to Leu-70 (removed in mature form).

Belongs to the G protein gamma family. In terms of assembly, g proteins are composed of 3 units, alpha, beta and gamma. As to expression, detected in the olfactory epithelium, the vomeronasal epithelium and, to a lesser extent, the olfactory bulb.

It localises to the cell membrane. Guanine nucleotide-binding proteins (G proteins) are involved as a modulator or transducer in various transmembrane signaling systems. The beta and gamma chains are required for the GTPase activity, for replacement of GDP by GTP, and for G protein-effector interaction. This subunit may have a very specific role in the development and turnover of olfactory and vomeronasal neurons. The protein is Guanine nucleotide-binding protein G(I)/G(S)/G(O) subunit gamma-8 (Gng8) of Rattus norvegicus (Rat).